The chain runs to 132 residues: Small ribosomal subunit protein uS8 (132 aa).

This sequence belongs to the universal ribosomal protein uS8 family. Part of the 30S ribosomal subunit. Contacts proteins S5 and S12.

Functionally, one of the primary rRNA binding proteins, it binds directly to 16S rRNA central domain where it helps coordinate assembly of the platform of the 30S subunit. This is Small ribosomal subunit protein uS8 from Lactococcus lactis subsp. lactis (strain IL1403) (Streptococcus lactis).